A 514-amino-acid polypeptide reads, in one-letter code: Flagellin B (514 aa).

Belongs to the bacterial flagellin family. In terms of assembly, heteromer of FlaA and FlaB. FlaB is located proximal to the hook while the remainder of the filament is composed of the predominant FlaA.

Its subcellular location is the secreted. It is found in the bacterial flagellum. Its function is as follows. Flagellin is the subunit protein which polymerizes to form the filaments of bacterial flagella. Important for motility and virulence. The sequence is that of Flagellin B (flaB) from Helicobacter pylori (strain J99 / ATCC 700824) (Campylobacter pylori J99).